The following is a 224-amino-acid chain: Elongation factor 1-beta 2 (224 aa).

At Ala-2 the chain carries N-acetylalanine. A GST C-terminal domain is found at 14-65; that stretch reads VKSVEEHLAGKTYISGDQLSVDDVKVYAAVPVKPSDAFPNASKWYESVASQL. Residues 89–139 are disordered; it reads EAEAPAAAADDDDDMDLFGDETEEEKKAAEEREAAKKDTKKPKESGKSSVL. A compositionally biased stretch (acidic residues) spans 97–111; that stretch reads ADDDDDMDLFGDETE. Residues 112-134 are compositionally biased toward basic and acidic residues; the sequence is EEKKAAEEREAAKKDTKKPKESG.

The protein belongs to the EF-1-beta/EF-1-delta family. EF-1 is composed of 4 subunits: alpha, beta (1B-alpha=beta'), delta (1B-beta), and gamma (1B-gamma).

Its function is as follows. EF-1-beta and EF-1-delta stimulate the exchange of GDP bound to EF-1-alpha to GTP. In Arabidopsis thaliana (Mouse-ear cress), this protein is Elongation factor 1-beta 2.